Here is a 101-residue protein sequence, read N- to C-terminus: Interleukin-8 (101 aa).

The signal sequence occupies residues 1–22 (MTSKLAVALLAAFVLSAALCEA). Position 27 is a citrulline (R27). 2 disulfides stabilise this stretch: C34–C61 and C36–C77.

Belongs to the intercrine alpha (chemokine CxC) family. In terms of assembly, homodimer. Interacts with TNFAIP6 (via Link domain); this interaction interferes with chemokine binding to glycosaminoglycans. Post-translationally, citrullination at Arg-27 prevents proteolysis, and dampens tissue inflammation, it also enhances leukocytosis, possibly through impaired chemokine clearance from the blood circulation.

Its subcellular location is the secreted. Chemotactic factor that mediates inflammatory response by attracting neutrophils, basophils, and T-cells to clear pathogens and protect the host from infection. Also plays an important role in neutrophil activation. Released in response to an inflammatory stimulus, exerts its effect by binding to the G-protein-coupled receptors CXCR1 and CXCR2, primarily found in neutrophils, monocytes and endothelial cells. G-protein heterotrimer (alpha, beta, gamma subunits) constitutively binds to CXCR1/CXCR2 receptor and activation by IL8 leads to beta and gamma subunits release from Galpha (GNAI2 in neutrophils) and activation of several downstream signaling pathways including PI3K and MAPK pathways. The polypeptide is Interleukin-8 (CXCL8) (Canis lupus familiaris (Dog)).